Reading from the N-terminus, the 1095-residue chain is Solute carrier family 12 member 1 (1095 aa).

Over 1-173 the chain is Cytoplasmic; it reads MSVNIPSNSV…EEDVTGVVKF (173 aa). The short motif at 16–19 is the RFXV motif element; it reads RFQV. The segment at 26–45 is disordered; that stretch reads HGSGAAMSDSTDPPHYEETS. Residues Ser57 and Ser87 each carry the phosphoserine modification. Residues Thr91, Thr96, Thr101, and Thr114 each carry the phosphothreonine modification. A Phosphoserine modification is found at Ser116. Residue Ser126 is modified to Phosphoserine; by AMPK. Residue Ser144 is modified to Phosphoserine. A helical membrane pass occupies residues 174-194; it reads GWVKGVLVRCMLNIWGVMLFI. Over 195–197 the chain is Extracellular; sequence RLS. The chain crosses the membrane as a helical span at residues 198 to 218; that stretch reads WIVGEAGIGLGVIIIGLSVVV. Residues 219–255 lie on the Cytoplasmic side of the membrane; it reads TTLTGISMSAICTNGVVRGGGAYYLISRSLGPEFGGS. A helical transmembrane segment spans residues 256-276; that stretch reads IGLIFRFANAVRVAMYVVGFA. The Extracellular segment spans residues 277–298; the sequence is ETVVDLLKESDSMMVDPTNDIR. The helical transmembrane segment at 299–319 threads the bilayer; that stretch reads IIGSITVVILLGISVAGMEWE. Residues 320–323 are Cytoplasmic-facing; the sequence is AKAQ. The chain crosses the membrane as a helical span at residues 324 to 344; it reads VILLVILLIGIANFFIGTVIP. The Extracellular segment spans residues 345–375; sequence SNNEKKSRGFFNYQASIFAENFGPSFTEGEG. A helical membrane pass occupies residues 376 to 396; the sequence is FFSVFAIFFPAATGILAGANI. Over 397–413 the chain is Cytoplasmic; sequence SGDLEDPQDAIPRGTML. A helical membrane pass occupies residues 414-434; sequence AIFITTVAYIGVAICVRACVV. The Extracellular portion of the chain corresponds to 435–546; sequence RDATGSMNDT…NNEPLRGYFL (112 aa). Asn442 and Asn452 each carry an N-linked (GlcNAc...) asparagine glycan. 2 helical membrane-spanning segments follow: residues 547–567 and 568–588; these read TFVI…APII and SNFF…ASYA. Topologically, residues 589 to 605 are extracellular; it reads KSPGWRPAYGIYNMWVS. A helical transmembrane segment spans residues 606–626; that stretch reads LFGAILCCAVMFVINWWAAVI. The Cytoplasmic segment spans residues 627–1095; it reads TYVIELFLYI…NHKNVLTFYS (469 aa).

It belongs to the SLC12A transporter family. As to quaternary structure, when phosphorylated, interacts with PPP3CB. In terms of processing, phosphorylated at Ser-87, Thr-96 and Thr-101 by OXSR1/OSR1 and STK39/SPAK downstream of WNK kinases (WNK1, WNK2, WNK3 or WNK4), promoting its activity. In terms of tissue distribution, expressed predominantly in kidney (at protein level).

The protein resides in the apical cell membrane. The catalysed reaction is K(+)(out) + 2 chloride(out) + Na(+)(out) = K(+)(in) + 2 chloride(in) + Na(+)(in). Its activity is regulated as follows. Activated following phosphorylation by OXSR1/OSR1 and STK39/SPAK downstream of WNK kinases (WNK1, WNK2, WNK3 or WNK4). Its function is as follows. Renal sodium, potassium and chloride ion cotransporter that mediates the transepithelial NaCl reabsorption in the thick ascending limb and plays an essential role in the urinary concentration and volume regulation. Electrically silent transporter system. The chain is Solute carrier family 12 member 1 (Slc12a1) from Rattus norvegicus (Rat).